The following is a 357-amino-acid chain: Alanine racemase (357 aa).

Lysine 34 serves as the catalytic Proton acceptor; specific for D-alanine. At lysine 34 the chain carries N6-(pyridoxal phosphate)lysine. Residue arginine 127 participates in substrate binding. The Proton acceptor; specific for L-alanine role is filled by tyrosine 252. Methionine 301 contacts substrate.

It belongs to the alanine racemase family. Pyridoxal 5'-phosphate serves as cofactor.

It carries out the reaction L-alanine = D-alanine. It participates in amino-acid biosynthesis; D-alanine biosynthesis; D-alanine from L-alanine: step 1/1. In terms of biological role, catalyzes the interconversion of L-alanine and D-alanine. May also act on other amino acids. This Dichelobacter nodosus (strain VCS1703A) protein is Alanine racemase (alr).